We begin with the raw amino-acid sequence, 69 residues long: MTKPTTEQPTTVKCPTCQSAVIWNAESPFRPFCSKKCQMIDFGEWADEEKSIPGAPDMSDSDGWSEDQY.

Cys14, Cys17, Cys33, and Cys37 together coordinate Zn(2+). Positions 46-69 (ADEEKSIPGAPDMSDSDGWSEDQY) are disordered. Over residues 59–69 (SDSDGWSEDQY) the composition is skewed to acidic residues.

It belongs to the DNA gyrase inhibitor YacG family. Interacts with GyrB. Zn(2+) is required as a cofactor.

In terms of biological role, inhibits all the catalytic activities of DNA gyrase by preventing its interaction with DNA. Acts by binding directly to the C-terminal domain of GyrB, which probably disrupts DNA binding by the gyrase. This is DNA gyrase inhibitor YacG from Aliivibrio fischeri (strain ATCC 700601 / ES114) (Vibrio fischeri).